Reading from the N-terminus, the 246-residue chain is MKYTVDTHTHTVASTHAYSTIHDYLPIAKAKGIKLFATTDHGPDMADAPHFWHFVNLHVLPRVVDGVGILRGIEANIKNIDGEIDFPERYESRLDMIMAGFHEPVFPPCDQATHTQAMINAIKSGRVDMISHPGNPAFPIDIQAVVKAAAEYRVALELNNSSFSHSRPGSEGNCRAIVEAARDMGAYLTFGSDSHVAFSLGDFEHCHRLVTEAGFPAERILARSPRALLDFLESRGRAHIPEFADL.

Zn(2+) is bound by residues His8, His10, His16, His41, Glu74, His102, His132, Asp193, and His195.

This sequence belongs to the PHP family. Zn(2+) is required as a cofactor.

The protein is Probable phosphatase AHA_1344 of Aeromonas hydrophila subsp. hydrophila (strain ATCC 7966 / DSM 30187 / BCRC 13018 / CCUG 14551 / JCM 1027 / KCTC 2358 / NCIMB 9240 / NCTC 8049).